A 394-amino-acid polypeptide reads, in one-letter code: Putative nickel insertion protein (394 aa).

The protein belongs to the LarC family.

This is Putative nickel insertion protein from Syntrophotalea carbinolica (strain DSM 2380 / NBRC 103641 / GraBd1) (Pelobacter carbinolicus).